Consider the following 330-residue polypeptide: MEFRKEVEVAKILVGGKVEENVVEIRYDPLTLQTSRILKKTIPMQSGDFQEEIDSTRSWCPFCPERIEQMVSRDPEIMEGELWKRGEAVLFSNLTPYSKYSLVLRLTEEHYVPVSEFKSQHFFDAFKLIQEYVKKVPEGKYYVTIGMNYLKPSGSSIMHPHIQVMISEVSTDYFARLDWSALEFKESNGVDYWKKLAEVEKGGERYIGSTDKTEWVAAFAPKGFFHFTGIPEEREFMQMSDEQLKGIAEGIAKILRYYGRKNLNAFNFSMFCADRIGDHFRTNINIVARTPFAKYYWCDVFYPKMFHDESVVFFVPEEYAKEIREIWSEL.

This is an uncharacterized protein from Archaeoglobus fulgidus (strain ATCC 49558 / DSM 4304 / JCM 9628 / NBRC 100126 / VC-16).